The following is a 292-amino-acid chain: Large ribosomal subunit protein bL19m (292 aa).

The tract at residues Gly-39 to Pro-68 is disordered. Ser-77 is subject to Phosphoserine.

It belongs to the bacterial ribosomal protein bL19 family. As to quaternary structure, component of the mitochondrial ribosome large subunit (39S) which comprises a 16S rRNA and about 50 distinct proteins.

The protein resides in the mitochondrion. The sequence is that of Large ribosomal subunit protein bL19m (MRPL19) from Bos taurus (Bovine).